Reading from the N-terminus, the 195-residue chain is dCTP deaminase (195 aa).

DCTP contacts are provided by residues 110–115 (RSSLAR), Asp-128, 136–138 (VLE), Tyr-171, Lys-178, and Gln-182. The Proton donor/acceptor role is filled by Glu-138.

Belongs to the dCTP deaminase family. As to quaternary structure, homotrimer.

The catalysed reaction is dCTP + H2O + H(+) = dUTP + NH4(+). The protein operates within pyrimidine metabolism; dUMP biosynthesis; dUMP from dCTP (dUTP route): step 1/2. In terms of biological role, catalyzes the deamination of dCTP to dUTP. The polypeptide is dCTP deaminase (Idiomarina loihiensis (strain ATCC BAA-735 / DSM 15497 / L2-TR)).